A 283-amino-acid polypeptide reads, in one-letter code: Urease accessory protein UreD 2 (283 aa).

Over residues 1–11 the composition is skewed to basic and acidic residues; that stretch reads MGRRAPDRLDR. The disordered stretch occupies residues 1–30; sequence MGRRAPDRLDRGVTTTSPRTQAPPQAGRGV. Residues 13-23 are compositionally biased toward polar residues; sequence VTTTSPRTQAP.

The protein belongs to the UreD family. UreD, UreF and UreG form a complex that acts as a GTP-hydrolysis-dependent molecular chaperone, activating the urease apoprotein by helping to assemble the nickel containing metallocenter of UreC. The UreE protein probably delivers the nickel.

It is found in the cytoplasm. Required for maturation of urease via the functional incorporation of the urease nickel metallocenter. This chain is Urease accessory protein UreD 2, found in Saccharopolyspora erythraea (strain ATCC 11635 / DSM 40517 / JCM 4748 / NBRC 13426 / NCIMB 8594 / NRRL 2338).